The chain runs to 579 residues: UPF0324 membrane protein DVU_2133 (579 aa).

11 consecutive transmembrane segments (helical) span residues 26-45, 193-215, 225-243, 250-272, 305-327, 369-391, 401-423, 436-456, 476-495, 515-534, and 549-571; these read YWAI…LFLA, PFNI…AVGM, FLVG…LMMG, YWGI…TVGT, IGIP…TFIF, LTLA…PAFI, GGAW…AFLG, IQNV…CARV, FVLG…GSLG, LRNW…TNFR, and YVAG…FYIV.

It belongs to the UPF0324 family.

It localises to the cell membrane. The chain is UPF0324 membrane protein DVU_2133 from Nitratidesulfovibrio vulgaris (strain ATCC 29579 / DSM 644 / CCUG 34227 / NCIMB 8303 / VKM B-1760 / Hildenborough) (Desulfovibrio vulgaris).